A 1468-amino-acid polypeptide reads, in one-letter code: Centrosomal protein of 290 kDa (1468 aa).

7 coiled-coil regions span residues 1–25 (ERQL…VGEK), 52–121 (SLSE…IEQA), 172–292 (KMYE…DEKA), 318–528 (VASK…EAQK), 559–592 (RIIL…ILSR), 627–688 (HTLK…QADN), and 736–1441 (IKLK…SEQF). The self-association (with itself or N-terminus) stretch occupies residues 1060 to 1468 (TTGLTVDQVM…QENPVNFPIY (409 aa)). Residues 1130–1152 (LSKDAYSRPSTSGIDSDDHYQRE) are disordered.

As to quaternary structure, part of the tectonic-like complex (also named B9 complex). Interacts with ATF4 via its N-terminal region. Associates with the BBSome complex, interacting (via N-terminus) with BBS4. Interacts with IQCB1/NPHP5; IQCB1 and CEP290/NPHP6 are proposed to form a functional NPHP5-6 module localized to the centrosome. Interacts with NPHP4; the interaction likely requires additional interactors. Interacts with ZNF423, FAM161A, CEP162, CEP162, CEP131, TALPID3, CCDC13, CC2D2A, RPGRIP1. Can self-associate (homo- or heteromeric). Interacts with CCP110; required for suppressing cilia formation. Interacts with RPGR. Associates (via C-terminus) with microtubules; association to microtubule is reduced in response to cellular stress, such as ultraviolet light (UV) radiation or heat shock, in a process that requires p38 MAP kinase signaling. Interacts with FAM161A. Interacts with PCM1. Interacts with CCDC66. Interacts with ARMC9 and CSPP1. In terms of processing, ubiquitinated. May undergo monoubiquitination; monoubiquitination is inhibited in response to cellular stress, such as ultraviolet light (UV) radiation or heat shock, but does not cause its displacement from centriolar satellites.

The protein localises to the cytoplasm. It localises to the cytoskeleton. The protein resides in the microtubule organizing center. It is found in the centrosome. Its subcellular location is the centriolar satellite. The protein localises to the nucleus. It localises to the cell projection. The protein resides in the cilium. It is found in the cilium basal body. Its subcellular location is the centriole. The protein localises to the cytoplasmic vesicle. Involved in early and late steps in cilia formation. Its association with CCP110 is required for inhibition of primary cilia formation by CCP110. May play a role in early ciliogenesis in the disappearance of centriolar satellites and in the transition of primary ciliar vesicles (PCVs) to capped ciliary vesicles (CCVs). Required for the centrosomal recruitment of RAB8A and for the targeting of centriole satellite proteins to centrosomes such as of PCM1. Required for the correct localization of ciliary and phototransduction proteins in retinal photoreceptor cells; may play a role in ciliary transport processes. Required for efficient recruitment of RAB8A to primary cilium. In the ciliary transition zone is part of the tectonic-like complex which is required for tissue-specific ciliogenesis and may regulate ciliary membrane composition. Involved in regulation of the BBSome complex integrity, specifically for presence of BBS2, BBS5 and BBS8/TTC8 in the complex, and in ciliary targeting of selected BBSome cargos. May play a role in controlling entry of the BBSome complex to cilia possibly implicating IQCB1/NPHP5. Activates ATF4-mediated transcription. The sequence is that of Centrosomal protein of 290 kDa (CEP290) from Bos taurus (Bovine).